A 657-amino-acid polypeptide reads, in one-letter code: Zinc transporter ZIP4 (657 aa).

The first 22 residues, Met1 to Met22, serve as a signal peptide directing secretion. Residues Val23–Tyr335 lie on the Extracellular side of the membrane. Asn193, Asn220, and Asn268 each carry an N-linked (GlcNAc...) asparagine glycan. Residues Leu336–Leu356 traverse the membrane as a helical segment. The Cytoplasmic portion of the chain corresponds to Thr357–Ser374. Residues Leu375 to Leu395 form a helical membrane-spanning segment. Residues His396–Arg417 lie on the Extracellular side of the membrane. A helical membrane pass occupies residues Leu418–Leu438. At Leu439 to Tyr508 the chain is on the cytoplasmic side. The Essential for SLC39A4 endocytosis signature appears at Leu462–Leu464. Residues Ser467–Leu491 form a disordered region. Residues Leu509–Ala528 traverse the membrane as a helical segment. Zn(2+) contacts are provided by His517, Asn518, and Asp521. The Extracellular portion of the chain corresponds to Phe529–Gly536. A helical membrane pass occupies residues Leu537 to Leu563. Zn(2+) is bound by residues His546, Glu547, and His550. Topologically, residues Thr564 to Ala568 are cytoplasmic. Residues Leu569 to Val589 form a helical membrane-spanning segment. Residues Gly590–Thr597 are Extracellular-facing. The helical transmembrane segment at Trp598 to Ala618 threads the bilayer. Residues Met619–Pro627 are Cytoplasmic-facing. The chain crosses the membrane as a helical span at residues Trp628–Leu648. At Ser649–Phe657 the chain is on the extracellular side.

This sequence belongs to the ZIP transporter (TC 2.A.5) family. As to quaternary structure, homodimer; homodimerization is mediated by the transmembrane domain. The extracellular N-terminal ectodomain is cleaved when cells are Zn(2+) deficient, N-terminally cleaved SLC39A4 is internalized at a faster rate. In terms of processing, under excess Zn(2+) conditions, SLC39A4 on the cell surface is rapidly endocytosed, ubiquitinated and degraded. Post-translationally, glycosylated. As to expression, expressed in duodenum, jejunum, and ileum.

It is found in the cell membrane. The protein localises to the recycling endosome membrane. It localises to the apical cell membrane. The catalysed reaction is Zn(2+)(in) = Zn(2+)(out). Functionally, selective transporter that mediates the uptake of Zn(2+). Plays an essential role for dietary zinc uptake from small intestine. The Zn(2+) uniporter activity is regulated by zinc availability. Also exhibits polyspecific binding and transport of Cu(2+), Cd(2+) and possibly Ni(2+) but at higher concentrations. The protein is Zinc transporter ZIP4 (Slc39a4) of Rattus norvegicus (Rat).